The chain runs to 91 residues: Non-hemolytic enterotoxin 105 kDa component (91 aa).

It depends on Zn(2+) as a cofactor.

It is found in the secreted. In terms of biological role, this protein is a metalloprotease with gelatinolytic and collagenolytic activity and is a component of the non-hemolytic enterotoxin complex (NHE). The polypeptide is Non-hemolytic enterotoxin 105 kDa component (Bacillus cereus).